Here is a 467-residue protein sequence, read N- to C-terminus: Cysteine--tRNA ligase (467 aa).

Zn(2+) is bound at residue Cys30. A 'HIGH' region motif is present at residues 32-42; it reads PTVYNYIHIGN. Cys210, His235, and Glu239 together coordinate Zn(2+). Positions 267–271 match the 'KMSKS' region motif; sequence KMSKS. Lys270 serves as a coordination point for ATP. Ser271 is subject to Phosphoserine.

It belongs to the class-I aminoacyl-tRNA synthetase family. Monomer. It depends on Zn(2+) as a cofactor.

The protein localises to the cytoplasm. It carries out the reaction tRNA(Cys) + L-cysteine + ATP = L-cysteinyl-tRNA(Cys) + AMP + diphosphate. This Geobacillus thermodenitrificans (strain NG80-2) protein is Cysteine--tRNA ligase.